The sequence spans 117 residues: Multidrug resistance protein EbrB (117 aa).

A run of 4 helical transmembrane segments spans residues 3 to 23 (GLLYLALAIVSEVFGSTMLKL), 31 to 51 (WPIGGVIAGFLSAFTFLSFSL), 59 to 79 (AYATWSGVGTALTAIVGFLLF), and 81 to 101 (ETISLKGVFGLTLVIAGVVVL).

This sequence belongs to the drug/metabolite transporter (DMT) superfamily. Small multidrug resistance (SMR) (TC 2.A.7.1) family. EbrA/EbrB subfamily. In terms of assembly, the efflux pump is composed of EbrA and EbrB.

The protein localises to the cell membrane. Functionally, part of a multidrug efflux pump. Confers resistance to cationic lipophilic dyes such as ethidium bromide, acriflavine, pyronine Y and safranin O. The efflux is probably coupled to an influx of protons. This chain is Multidrug resistance protein EbrB (ebrB), found in Bacillus atrophaeus.